Here is a 225-residue protein sequence, read N- to C-terminus: Membrane protein LapB (225 aa).

This sequence to H.influenzae HI_1119.

It localises to the cell membrane. In Mannheimia haemolytica (Pasteurella haemolytica), this protein is Membrane protein LapB (lapB).